Consider the following 100-residue polypeptide: MQLNPTEKDKLLLFTAGMVAERRKNRGVKLNYPESIAYISMLLMEGARDGKTVAQLMSEGATYLSANDVMEGIAEMIHDVQVEATFPDGTKLVTVHNPIV.

This sequence belongs to the urease gamma subunit family. In terms of assembly, heterotrimer of UreA (gamma), UreB (beta) and UreC (alpha) subunits. Three heterotrimers associate to form the active enzyme.

The protein localises to the cytoplasm. It catalyses the reaction urea + 2 H2O + H(+) = hydrogencarbonate + 2 NH4(+). It participates in nitrogen metabolism; urea degradation; CO(2) and NH(3) from urea (urease route): step 1/1. The sequence is that of Urease subunit gamma 2 from Psychrobacter cryohalolentis (strain ATCC BAA-1226 / DSM 17306 / VKM B-2378 / K5).